The primary structure comprises 45 residues: Photosystem I reaction center subunit IX 1 (45 aa).

A helical membrane pass occupies residues 9-29; it reads WFRSAPVVATIWITLTAGIIV.

The protein belongs to the PsaJ family.

It is found in the cellular thylakoid membrane. In terms of biological role, may help in the organization of the PsaE and PsaF subunits. The protein is Photosystem I reaction center subunit IX 1 of Prochlorococcus marinus (strain NATL1A).